Reading from the N-terminus, the 339-residue chain is Anthranilate phosphoribosyltransferase (339 aa).

5-phospho-alpha-D-ribose 1-diphosphate is bound by residues Gly-81, 84–85, Thr-89, 91–94, 109–117, and Thr-121; these read GD, NIST, and KHGNRNLSS. Residue Gly-81 participates in anthranilate binding. Ser-93 contributes to the Mg(2+) binding site. Residue Asn-112 coordinates anthranilate. Arg-167 serves as a coordination point for anthranilate. Mg(2+) is bound by residues Asp-226 and Glu-227.

The protein belongs to the anthranilate phosphoribosyltransferase family. In terms of assembly, homodimer. It depends on Mg(2+) as a cofactor.

The catalysed reaction is N-(5-phospho-beta-D-ribosyl)anthranilate + diphosphate = 5-phospho-alpha-D-ribose 1-diphosphate + anthranilate. It participates in amino-acid biosynthesis; L-tryptophan biosynthesis; L-tryptophan from chorismate: step 2/5. In terms of biological role, catalyzes the transfer of the phosphoribosyl group of 5-phosphorylribose-1-pyrophosphate (PRPP) to anthranilate to yield N-(5'-phosphoribosyl)-anthranilate (PRA). The polypeptide is Anthranilate phosphoribosyltransferase (Ruegeria pomeroyi (strain ATCC 700808 / DSM 15171 / DSS-3) (Silicibacter pomeroyi)).